Consider the following 105-residue polypeptide: Large ribosomal subunit protein uL24 (105 aa).

Belongs to the universal ribosomal protein uL24 family. Part of the 50S ribosomal subunit.

Its function is as follows. One of two assembly initiator proteins, it binds directly to the 5'-end of the 23S rRNA, where it nucleates assembly of the 50S subunit. In terms of biological role, one of the proteins that surrounds the polypeptide exit tunnel on the outside of the subunit. This chain is Large ribosomal subunit protein uL24, found in Psychrobacter arcticus (strain DSM 17307 / VKM B-2377 / 273-4).